Here is a 418-residue protein sequence, read N- to C-terminus: MYKRIKGTEDIFGDDIKYWYYIENVVKETVRLYGYSEIRTPIFEATELFIRSVGEETDIVQKEMYTFEDKGQRSITLRPEGTAPTIRAFIENSMMATGLPKRLFYIGPMFRYERPQKGRQRQFHQFGVELIGSPSPLADAEAIIVADRVLKNLGLLNYTIKINSIGCDKCRANYKNALKEYYSDKLDYVCDDCKRRYNTNVLRLLDCKVDVEYIKDAPKITDYLCDDCKHHYEETKRLLDNLKIKYVEDPLLVRGLDYYNGVVFEIHHGDLGAQSAVGGGGRYDKLIKELGGSQTPSLGFAMGIERLIIALKNEKIPVEEIKNNEIFVAHLGEQARIEALKIAEDLRDNGISVVFSTMERGLSAQLKHAARLKCKLCVIVGENELERNIVILRNMETGEQIEIERDYVVGTAKEWIEG.

The protein belongs to the class-II aminoacyl-tRNA synthetase family. In terms of assembly, homodimer.

It is found in the cytoplasm. It carries out the reaction tRNA(His) + L-histidine + ATP = L-histidyl-tRNA(His) + AMP + diphosphate + H(+). In Thermosipho africanus (strain TCF52B), this protein is Histidine--tRNA ligase.